Reading from the N-terminus, the 120-residue chain is Flagellar protein FliT (120 aa).

Positions 1–50 (MERHQHLLSEYQQILTLSEQMLMLATVENWNALVDLEMTYLKAVENTANI) are required for homodimerization. Residues 60-98 (LQELLRQKLRSILENEIEIKRLLQRRLDKLSELVGQSTR) form a fliD binding region.

It belongs to the FliT family. As to quaternary structure, homodimer. Interacts with FliD and FlhC.

Its subcellular location is the cytoplasm. The protein localises to the cytosol. Its function is as follows. Dual-function protein that regulates the transcription of class 2 flagellar operons and that also acts as an export chaperone for the filament-capping protein FliD. As a transcriptional regulator, acts as an anti-FlhDC factor; it directly binds FlhC, thus inhibiting the binding of the FlhC/FlhD complex to class 2 promoters, resulting in decreased expression of class 2 flagellar operons. As a chaperone, effects FliD transition to the membrane by preventing its premature polymerization, and by directing it to the export apparatus. The sequence is that of Flagellar protein FliT from Yersinia pestis bv. Antiqua (strain Antiqua).